Reading from the N-terminus, the 339-residue chain is Ketol-acid reductoisomerase (NADP(+)) (339 aa).

The KARI N-terminal Rossmann domain maps to M1–T182. NADP(+) contacts are provided by residues Y24–Q27, S51, T53, and D83–Q86. H108 is a catalytic residue. G134 serves as a coordination point for NADP(+). The 146-residue stretch at T183–T328 folds into the KARI C-terminal knotted domain. Mg(2+)-binding residues include D191, E195, E227, and E231. S252 is a substrate binding site.

The protein belongs to the ketol-acid reductoisomerase family. Mg(2+) is required as a cofactor.

It catalyses the reaction (2R)-2,3-dihydroxy-3-methylbutanoate + NADP(+) = (2S)-2-acetolactate + NADPH + H(+). The catalysed reaction is (2R,3R)-2,3-dihydroxy-3-methylpentanoate + NADP(+) = (S)-2-ethyl-2-hydroxy-3-oxobutanoate + NADPH + H(+). Its pathway is amino-acid biosynthesis; L-isoleucine biosynthesis; L-isoleucine from 2-oxobutanoate: step 2/4. It functions in the pathway amino-acid biosynthesis; L-valine biosynthesis; L-valine from pyruvate: step 2/4. Its function is as follows. Involved in the biosynthesis of branched-chain amino acids (BCAA). Catalyzes an alkyl-migration followed by a ketol-acid reduction of (S)-2-acetolactate (S2AL) to yield (R)-2,3-dihydroxy-isovalerate. In the isomerase reaction, S2AL is rearranged via a Mg-dependent methyl migration to produce 3-hydroxy-3-methyl-2-ketobutyrate (HMKB). In the reductase reaction, this 2-ketoacid undergoes a metal-dependent reduction by NADPH to yield (R)-2,3-dihydroxy-isovalerate. The protein is Ketol-acid reductoisomerase (NADP(+)) of Bartonella bacilliformis (strain ATCC 35685 / KC583 / Herrer 020/F12,63).